Consider the following 1339-residue polypeptide: Receptor tyrosine-protein kinase erbB-3 (1339 aa).

Residues 1–19 (MSAIGTLQVLGFLLSLARG) form the signal peptide. At 20–641 (SEMGNSQAVC…QAEVLMSKPH (622 aa)) the chain is on the extracellular side. A glycan (N-linked (GlcNAc...) asparagine) is linked at Asn126. Cystine bridges form between Cys186–Cys194, Cys190–Cys202, Cys210–Cys218, Cys214–Cys226, Cys227–Cys235, Cys231–Cys243, Cys246–Cys255, Cys259–Cys286, Cys290–Cys301, Cys305–Cys320, and Cys323–Cys327. A glycan (N-linked (GlcNAc...) asparagine) is linked at Asn250. Residues Asn353, Asn408, Asn414, Asn437, and Asn469 are each glycosylated (N-linked (GlcNAc...) asparagine). Disulfide bonds link Cys500-Cys509, Cys504-Cys517, Cys520-Cys529, Cys533-Cys549, Cys552-Cys565, Cys556-Cys573, Cys576-Cys585, Cys589-Cys610, Cys613-Cys621, and Cys617-Cys629. Asn522 carries N-linked (GlcNAc...) asparagine glycosylation. Residue Asn566 is glycosylated (N-linked (GlcNAc...) asparagine). Residue Asn616 is glycosylated (N-linked (GlcNAc...) asparagine). A helical membrane pass occupies residues 642-662 (LVIAVTVGLTVIFLILGGSFL). At 663–1339 (YWRGRRIQNK…LFPKANAQRI (677 aa)) the chain is on the cytoplasmic side. Ser684 is modified (phosphoserine). Residues 707–964 (LRKLKVLGSG…TFKELANEFT (258 aa)) enclose the Protein kinase domain. Residues 713 to 721 (LGSGVFGTV), Lys740, 786 to 788 (QYL), and 832 to 837 (DLALRN) each bind ATP. The active-site Proton acceptor is Asp832. Ser980 carries the post-translational modification Phosphoserine. Disordered regions lie at residues 1028-1052 (LSLP…SGYM), 1077-1156 (RPIS…GNGY), and 1181-1212 (SVLG…PRPG). Over residues 1185 to 1195 (TEEEDEDEEYE) the composition is skewed to acidic residues.

This sequence belongs to the protein kinase superfamily. Tyr protein kinase family. EGF receptor subfamily. In terms of assembly, monomer and homodimer. Heterodimer with each of the other ERBB receptors (Potential). Interacts with CSPG5, PA2G4, GRB7 and MUC1. Interacts with MYOC. Found in a ternary complex with NRG1 and ITGAV:ITGB3 or ITGA6:ITGB4. Autophosphorylated. Ligand-binding increases phosphorylation on tyrosine residues and promotes its association with the p85 subunit of phosphatidylinositol 3-kinase. In terms of tissue distribution, in the muscle, expression localizes to the synaptic sites of muscle fibers.

The protein localises to the membrane. The catalysed reaction is L-tyrosyl-[protein] + ATP = O-phospho-L-tyrosyl-[protein] + ADP + H(+). Its function is as follows. Tyrosine-protein kinase that plays an essential role as cell surface receptor for neuregulins. Binds to neuregulin-1 (NRG1) and is activated by it; ligand-binding increases phosphorylation on tyrosine residues and promotes its association with the p85 subunit of phosphatidylinositol 3-kinase. May also be activated by CSPG5. Involved in the regulation of myeloid cell differentiation. In Mus musculus (Mouse), this protein is Receptor tyrosine-protein kinase erbB-3 (Erbb3).